Here is a 283-residue protein sequence, read N- to C-terminus: 4-diphosphocytidyl-2-C-methyl-D-erythritol kinase (283 aa).

Residue K12 is part of the active site. 99-109 (PLAAGIGGGSA) provides a ligand contact to ATP. D141 is an active-site residue.

Belongs to the GHMP kinase family. IspE subfamily.

It carries out the reaction 4-CDP-2-C-methyl-D-erythritol + ATP = 4-CDP-2-C-methyl-D-erythritol 2-phosphate + ADP + H(+). It participates in isoprenoid biosynthesis; isopentenyl diphosphate biosynthesis via DXP pathway; isopentenyl diphosphate from 1-deoxy-D-xylulose 5-phosphate: step 3/6. Functionally, catalyzes the phosphorylation of the position 2 hydroxy group of 4-diphosphocytidyl-2C-methyl-D-erythritol. The protein is 4-diphosphocytidyl-2-C-methyl-D-erythritol kinase of Sphingopyxis alaskensis (strain DSM 13593 / LMG 18877 / RB2256) (Sphingomonas alaskensis).